A 255-amino-acid chain; its full sequence is Dehydrogenase/reductase SDR family member 11 (255 aa).

The signal sequence occupies residues Met1–Ala25. NADP(+) contacts are provided by residues Gly13–Ile18, Arg38–Thr39, Glu44, Asp65–Leu66, and Asn92. Substrate contacts are provided by Ser146 and Tyr161. NADP(+) is bound by residues Tyr161, Lys165, Val196 to Gln199, and Lys203. Tyr161 acts as the Proton acceptor in catalysis.

Belongs to the short-chain dehydrogenases/reductases (SDR) family.

It localises to the secreted. The catalysed reaction is a 3beta-hydroxysteroid + NADP(+) = a 3-oxosteroid + NADPH + H(+). It catalyses the reaction 17beta-estradiol + NAD(+) = estrone + NADH + H(+). The enzyme catalyses 17beta-estradiol + NADP(+) = estrone + NADPH + H(+). It participates in steroid biosynthesis; estrogen biosynthesis. Its activity is regulated as follows. Inhibited by flavonoids including apigenin, luteolin, genistein, kaempferol and quercetin and also by carbenoxolone, zearalenone, glycyrrhetinic, curcumin and flufenamic acid. Functionally, catalyzes the conversion of the 17-keto group of estrone, 4- and 5-androstenes and 5-alpha-androstanes into their 17-beta-hydroxyl metabolites and the conversion of the 3-keto group of 3-, 3,17- and 3,20- diketosteroids into their 3-hydroxyl metabolites. Exhibits reductive 3-beta-hydroxysteroid dehydrogenase activity toward 5-beta-androstanes, 5-beta-pregnanes, 4-pregnenes and bile acids. May also reduce endogenous and exogenous alpha-dicarbonyl compounds and xenobiotic alicyclic ketones. The polypeptide is Dehydrogenase/reductase SDR family member 11 (DHRS11) (Bos taurus (Bovine)).